A 58-amino-acid chain; its full sequence is Small ribosomal subunit protein bS21 (58 aa).

A disordered region spans residues 39 to 58 (DKPSVKKRAKSKAAAKYRSR). Residues 43–58 (VKKRAKSKAAAKYRSR) show a composition bias toward basic residues.

This sequence belongs to the bacterial ribosomal protein bS21 family.

In Chlamydia abortus (strain DSM 27085 / S26/3) (Chlamydophila abortus), this protein is Small ribosomal subunit protein bS21.